Here is a 1698-residue protein sequence, read N- to C-terminus: Bromodomain adjacent to zinc finger domain protein 2A (1698 aa).

Disordered regions lie at residues 240–262 (QSTP…QLPS) and 352–387 (VMQE…MTIE). Over residues 377 to 387 (ENVSQDEMTIE) the composition is skewed to polar residues. The region spanning 418 to 489 (IATPEQVCFP…EHFSFSPRMP (72 aa)) is the MBD domain. 2 disordered regions span residues 524-550 (RGRP…PPKV) and 610-653 (EKEE…DRKL). The segment covering 528 to 540 (RNLEKAKAKEQKA) has biased composition (basic and acidic residues). Residues 541–553 (KRGRGRPPKVKMI) constitute a DNA-binding region (a.T hook 1). Positions 579 to 638 (VQLCKLKKKMRRKARNQEAKLEAAKKLKEIKEKEEKKQKIQKAKNQEKAKNQEKKRTRRQ) form a coiled coil. Residues 610–632 (EKEEKKQKIQKAKNQEKAKNQEK) show a composition bias toward basic and acidic residues. Residues 701-766 (SCAFSDCLTT…LQAAMINPGL (66 aa)) enclose the DDT domain. 4 disordered regions span residues 884–905 (ITTT…NDEL), 1013–1063 (SFGS…PLTN), 1088–1110 (TVLT…SEAT), and 1123–1149 (TPCR…TAAT). Basic and acidic residues predominate over residues 890–900 (SLRRRSERNAE). Composition is skewed to polar residues over residues 1023–1040 (HPRN…SCHC) and 1051–1063 (VTDQ…PLTN). Residues 1091 to 1108 (TPESSPPHSESTPIISSE) show a composition bias toward low complexity. Residues 1124–1149 (PCRNHNQGLSTHSSNRLSPPSPTAAT) are compositionally biased toward polar residues. Residues 1204 to 1216 (EKRRGRRPSKLLK) constitute a DNA-binding region (a.T hook 3). A PHD-type zinc finger spans residues 1476–1526 (KVTCLYCRKGDNDELLLLCDSCDRGCHTYCHRPRMNEIPEGDWFCPTCISL). Residues 1549–1587 (FTEDSPSKPSRRREHPTASQFSPGESPASKKRRMGTRSQ) are disordered. The region spanning 1585–1689 (RSQSPDLTFC…KFYDARWEEF (105 aa)) is the Bromo domain.

This sequence belongs to the WAL family. As to quaternary structure, component of the NoRC complex, at least composed of SMARCA5/SNF2H and BAZ2A/TIP5.

It is found in the nucleus. The protein localises to the nucleolus. Functionally, essential component of the NoRC (nucleolar remodeling complex) complex, a complex that mediates silencing of a fraction of rDNA by recruiting histone-modifying enzymes and DNA methyltransferases, leading to heterochromatin formation and transcriptional silencing. In the complex, it plays a central role by being recruited to rDNA and by targeting chromatin modifying enzymes such as HDAC1, leading to repress RNA polymerase I transcription. Recruited to rDNA via its interaction with TTF1 and its ability to recognize and bind histone H4 acetylated on 'Lys-16' (H4K16ac), leading to deacetylation of H4K5ac, H4K8ac, H4K12ac but not H4K16ac. Specifically binds pRNAs, 150-250 nucleotide RNAs that are complementary in sequence to the rDNA promoter; pRNA-binding is required for heterochromatin formation and rDNA silencing. This Xenopus laevis (African clawed frog) protein is Bromodomain adjacent to zinc finger domain protein 2A (baz2a).